The chain runs to 198 residues: MGSLISEILTWLTNMGYAGIAIGLMIEIIPSEIVLAYGGYMVSEGTIGFIGAIIAGVIGGTIAQIFIYWIGRYGGRPFLDKYGKYLLIKKHHIDMSENWFQKYGAGVVFSARFIPVVRHAISIPAGIARMPFLKFVVLTVLAIIPWSILFVYLGIQLGSQWDDVENIAGTYTTPIMILAVVVIALYFVIKKRTAIFKR.

The next 5 membrane-spanning stretches (helical) occupy residues 15 to 35, 47 to 67, 107 to 127, 135 to 155, and 169 to 189; these read MGYA…EIVL, IGFI…QIFI, VVFS…PAGI, FVVL…YLGI, and GTYT…YFVI.

Belongs to the DedA family.

It is found in the cell membrane. Its function is as follows. Flippase that catalyzes the transport of undecaprenyl phosphate (UndP) across the cytoplasmic membrane, from the external side to the cytoplasmic side. Is involved in UndP recycling during peptidoglycan synthesis. This is Undecaprenyl phosphate transporter A from Bacillus subtilis (strain 168).